The primary structure comprises 261 residues: Cytochrome c oxidase subunit 3 (261 aa).

The Mitochondrial matrix portion of the chain corresponds to 2–15; it reads THQTHAYHMVNPSP. Residues 16 to 34 form a helical membrane-spanning segment; the sequence is WPLTGALSALLLTSGLVMW. At 35-40 the chain is on the mitochondrial intermembrane side; sequence FHYNST. A helical membrane pass occupies residues 41–66; it reads ILLSLGLLTNILTMYQWWRDIIREGT. Topologically, residues 67–72 are mitochondrial matrix; sequence YQGHHT. A helical membrane pass occupies residues 73 to 105; it reads PIVQKGLRYGMILFIVSEVFFFAGFFWAFYHSS. Residues 106–128 lie on the Mitochondrial intermembrane side of the membrane; sequence LVPTHDLGGCWPPTGITPLNPLE. The chain crosses the membrane as a helical span at residues 129–152; that stretch reads VPLLNTSVLLASGVSITWAHHSLM. The Mitochondrial matrix segment spans residues 153–155; it reads EGN. Residues 156–183 traverse the membrane as a helical segment; sequence RNHMNQALLITILLGLYFTILQASEYFE. The Mitochondrial intermembrane segment spans residues 184-190; the sequence is TSFSISD. Residues 191–223 traverse the membrane as a helical segment; sequence GIYGSTFFMATGFHGLHVIIGSTFLIVCLLRQL. Topologically, residues 224–232 are mitochondrial matrix; it reads KFHFTSKHH. A helical transmembrane segment spans residues 233-256; it reads FGFEAAAWYWHFVDVVWLFLYVSI. Topologically, residues 257-261 are mitochondrial intermembrane; the sequence is YWWGS.

The protein belongs to the cytochrome c oxidase subunit 3 family. Component of the cytochrome c oxidase (complex IV, CIV), a multisubunit enzyme composed of 14 subunits. The complex is composed of a catalytic core of 3 subunits MT-CO1, MT-CO2 and MT-CO3, encoded in the mitochondrial DNA, and 11 supernumerary subunits COX4I, COX5A, COX5B, COX6A, COX6B, COX6C, COX7A, COX7B, COX7C, COX8 and NDUFA4, which are encoded in the nuclear genome. The complex exists as a monomer or a dimer and forms supercomplexes (SCs) in the inner mitochondrial membrane with NADH-ubiquinone oxidoreductase (complex I, CI) and ubiquinol-cytochrome c oxidoreductase (cytochrome b-c1 complex, complex III, CIII), resulting in different assemblies (supercomplex SCI(1)III(2)IV(1) and megacomplex MCI(2)III(2)IV(2)).

It is found in the mitochondrion inner membrane. The catalysed reaction is 4 Fe(II)-[cytochrome c] + O2 + 8 H(+)(in) = 4 Fe(III)-[cytochrome c] + 2 H2O + 4 H(+)(out). In terms of biological role, component of the cytochrome c oxidase, the last enzyme in the mitochondrial electron transport chain which drives oxidative phosphorylation. The respiratory chain contains 3 multisubunit complexes succinate dehydrogenase (complex II, CII), ubiquinol-cytochrome c oxidoreductase (cytochrome b-c1 complex, complex III, CIII) and cytochrome c oxidase (complex IV, CIV), that cooperate to transfer electrons derived from NADH and succinate to molecular oxygen, creating an electrochemical gradient over the inner membrane that drives transmembrane transport and the ATP synthase. Cytochrome c oxidase is the component of the respiratory chain that catalyzes the reduction of oxygen to water. Electrons originating from reduced cytochrome c in the intermembrane space (IMS) are transferred via the dinuclear copper A center (CU(A)) of subunit 2 and heme A of subunit 1 to the active site in subunit 1, a binuclear center (BNC) formed by heme A3 and copper B (CU(B)). The BNC reduces molecular oxygen to 2 water molecules using 4 electrons from cytochrome c in the IMS and 4 protons from the mitochondrial matrix. The protein is Cytochrome c oxidase subunit 3 of Rattus norvegicus (Rat).